The primary structure comprises 261 residues: Triosephosphate isomerase (261 aa).

Residues N11 and K13 each coordinate D-glyceraldehyde 3-phosphate. H102 (electrophile) is an active-site residue. The active-site Proton acceptor is E174. G180, L239, and G241 together coordinate D-glyceraldehyde 3-phosphate.

Belongs to the triosephosphate isomerase family. Homodimer.

The enzyme catalyses D-glyceraldehyde 3-phosphate = dihydroxyacetone phosphate. It participates in carbohydrate biosynthesis; gluconeogenesis. It functions in the pathway carbohydrate degradation; glycolysis; D-glyceraldehyde 3-phosphate from glycerone phosphate: step 1/1. In terms of biological role, catalyzes the interconversion of glyceraldehyde 3-phosphate and dihydroxyacetone phosphate in the glycolytic and gluconeogenic pathways. This chain is Triosephosphate isomerase, found in Entamoeba histolytica (strain ATCC 30459 / HM-1:IMSS / ABRM).